The following is a 212-amino-acid chain: MSKGFLVSLEGPEGAGKTSVLEALLPILEEKGVEVLTTREPGGVLIGEKIREVILDPSHTQMDAKTELLLYIASRRQHLVEKVLPALEAGKLVIMDRFIDSSVAYQGFGRGLDIEAIDWLNQFATDGLKPDLTLYFDIEVEEGLARIAANSDREVNRLDLEGLDLHKKVRQGYLSLLDKEGNRIVKIDASLPLEQVVETTNAVLFDGMGLAK.

ATP is bound at residue 11-18 (GPEGAGKT).

It belongs to the thymidylate kinase family.

It carries out the reaction dTMP + ATP = dTDP + ADP. Its function is as follows. Phosphorylation of dTMP to form dTDP in both de novo and salvage pathways of dTTP synthesis. This Streptococcus pneumoniae serotype 2 (strain D39 / NCTC 7466) protein is Thymidylate kinase.